A 229-amino-acid chain; its full sequence is Uracil-DNA glycosylase (229 aa).

Asp-64 functions as the Proton acceptor in the catalytic mechanism.

It belongs to the uracil-DNA glycosylase (UDG) superfamily. UNG family.

It is found in the cytoplasm. It catalyses the reaction Hydrolyzes single-stranded DNA or mismatched double-stranded DNA and polynucleotides, releasing free uracil.. Functionally, excises uracil residues from the DNA which can arise as a result of misincorporation of dUMP residues by DNA polymerase or due to deamination of cytosine. This chain is Uracil-DNA glycosylase, found in Escherichia fergusonii (strain ATCC 35469 / DSM 13698 / CCUG 18766 / IAM 14443 / JCM 21226 / LMG 7866 / NBRC 102419 / NCTC 12128 / CDC 0568-73).